Here is a 483-residue protein sequence, read N- to C-terminus: Probable Xaa-Pro aminopeptidase MCYG_06503 (483 aa).

D233, D244, E409, and E453 together coordinate Mn(2+).

It belongs to the peptidase M24B family. It depends on Mn(2+) as a cofactor.

It catalyses the reaction Release of any N-terminal amino acid, including proline, that is linked to proline, even from a dipeptide or tripeptide.. Functionally, catalyzes the removal of a penultimate prolyl residue from the N-termini of peptides. This Arthroderma otae (strain ATCC MYA-4605 / CBS 113480) (Microsporum canis) protein is Probable Xaa-Pro aminopeptidase MCYG_06503.